The sequence spans 451 residues: Bacteriochlorophyllide d C-8(2)-methyltransferase (451 aa).

Residues 1 to 118 (MDDDSNQKPL…DDVANNRLKE (118 aa)) enclose the B12-binding domain. Residues 148 to 377 (VDGTKSIPIY…ALHLVIKSDR (230 aa)) form the Radical SAM core domain. Positions 162, 166, and 169 each coordinate [4Fe-4S] cluster.

It belongs to the radical SAM superfamily. [4Fe-4S] cluster serves as cofactor.

Its subcellular location is the cytoplasm. It catalyses the reaction 8,12-diethyl-3-vinylbacteriochlorophyllide d + S-adenosyl-L-methionine = 12-ethyl-8-propyl-3-vinylbacteriochlorophyllide d + S-adenosyl-L-homocysteine + H(+). The enzyme catalyses 12-ethyl-8-propyl-3-vinylbacteriochlorophyllide d + S-adenosyl-L-methionine = 12-ethyl-8-isobutyl-3-vinylbacteriochlorophyllide d + S-adenosyl-L-homocysteine + H(+). It participates in porphyrin-containing compound metabolism; bacteriochlorophyll biosynthesis (light-independent). Involved in the biosynthesis of the major light-harvesting pigment bacteriochlorophyll c (BChlc), which confers a significant competitive advantage to green sulfur bacteria living at limiting red and near-infrared light intensities. BchQ is a methyltransferase that adds two consecutive methyl groups to the ethyl carbon at the C-8(2) position of 8,12-diethyl-3-vinylbacteriochlorophyllide d to yield 12-ethyl-8-isobutyl-3-vinylbacteriochlorophyllide d. This chain is Bacteriochlorophyllide d C-8(2)-methyltransferase, found in Chlorobaculum tepidum (strain ATCC 49652 / DSM 12025 / NBRC 103806 / TLS) (Chlorobium tepidum).